Reading from the N-terminus, the 415-residue chain is Histidine--tRNA ligase (415 aa).

It belongs to the class-II aminoacyl-tRNA synthetase family. In terms of assembly, homodimer.

Its subcellular location is the cytoplasm. It carries out the reaction tRNA(His) + L-histidine + ATP = L-histidyl-tRNA(His) + AMP + diphosphate + H(+). The protein is Histidine--tRNA ligase of Rickettsia felis (strain ATCC VR-1525 / URRWXCal2) (Rickettsia azadi).